Reading from the N-terminus, the 246-residue chain is 23S rRNA (guanosine-2'-O-)-methyltransferase RlmB (246 aa).

The S-adenosyl-L-methionine site is built by glycine 198, isoleucine 218, and leucine 227.

The protein belongs to the class IV-like SAM-binding methyltransferase superfamily. RNA methyltransferase TrmH family. RlmB subfamily.

Its subcellular location is the cytoplasm. It carries out the reaction guanosine(2251) in 23S rRNA + S-adenosyl-L-methionine = 2'-O-methylguanosine(2251) in 23S rRNA + S-adenosyl-L-homocysteine + H(+). Functionally, specifically methylates the ribose of guanosine 2251 in 23S rRNA. The polypeptide is 23S rRNA (guanosine-2'-O-)-methyltransferase RlmB (Shewanella oneidensis (strain ATCC 700550 / JCM 31522 / CIP 106686 / LMG 19005 / NCIMB 14063 / MR-1)).